Here is a 154-residue protein sequence, read N- to C-terminus: Aspartate carbamoyltransferase regulatory chain (154 aa).

Zn(2+)-binding residues include Cys109, Cys114, Cys138, and Cys141.

This sequence belongs to the PyrI family. As to quaternary structure, contains catalytic and regulatory chains. Zn(2+) serves as cofactor.

In terms of biological role, involved in allosteric regulation of aspartate carbamoyltransferase. In Sodalis glossinidius (strain morsitans), this protein is Aspartate carbamoyltransferase regulatory chain.